Reading from the N-terminus, the 355-residue chain is UDP-N-acetylglucosamine--N-acetylmuramyl-(pentapeptide) pyrophosphoryl-undecaprenol N-acetylglucosamine transferase (355 aa).

UDP-N-acetyl-alpha-D-glucosamine is bound by residues 15 to 17, Asn-127, Arg-163, Ser-191, Ile-244, 263 to 268, and Gln-288; these read TGG and ALTVSE.

This sequence belongs to the glycosyltransferase 28 family. MurG subfamily.

The protein localises to the cell inner membrane. It carries out the reaction di-trans,octa-cis-undecaprenyl diphospho-N-acetyl-alpha-D-muramoyl-L-alanyl-D-glutamyl-meso-2,6-diaminopimeloyl-D-alanyl-D-alanine + UDP-N-acetyl-alpha-D-glucosamine = di-trans,octa-cis-undecaprenyl diphospho-[N-acetyl-alpha-D-glucosaminyl-(1-&gt;4)]-N-acetyl-alpha-D-muramoyl-L-alanyl-D-glutamyl-meso-2,6-diaminopimeloyl-D-alanyl-D-alanine + UDP + H(+). The protein operates within cell wall biogenesis; peptidoglycan biosynthesis. In terms of biological role, cell wall formation. Catalyzes the transfer of a GlcNAc subunit on undecaprenyl-pyrophosphoryl-MurNAc-pentapeptide (lipid intermediate I) to form undecaprenyl-pyrophosphoryl-MurNAc-(pentapeptide)GlcNAc (lipid intermediate II). This chain is UDP-N-acetylglucosamine--N-acetylmuramyl-(pentapeptide) pyrophosphoryl-undecaprenol N-acetylglucosamine transferase, found in Salmonella typhi.